Consider the following 392-residue polypeptide: Chalcone synthase 1 (392 aa).

Cys-167 is an active-site residue.

It belongs to the thiolase-like superfamily. Chalcone/stilbene synthases family.

It carries out the reaction (E)-4-coumaroyl-CoA + 3 malonyl-CoA + 3 H(+) = 2',4,4',6'-tetrahydroxychalcone + 3 CO2 + 4 CoA. It functions in the pathway secondary metabolite biosynthesis; flavonoid biosynthesis. In terms of biological role, the primary product of this enzyme is 4,2',4',6'-tetrahydroxychalcone (also termed naringenin-chalcone or chalcone) which can under specific conditions spontaneously isomerize into naringenin. In Secale cereale (Rye), this protein is Chalcone synthase 1 (CHS1).